Consider the following 163-residue polypeptide: Nucleotide-binding protein SYNPCC7002_A1983 (163 aa).

The protein belongs to the YajQ family.

Its function is as follows. Nucleotide-binding protein. This chain is Nucleotide-binding protein SYNPCC7002_A1983, found in Picosynechococcus sp. (strain ATCC 27264 / PCC 7002 / PR-6) (Agmenellum quadruplicatum).